A 374-amino-acid polypeptide reads, in one-letter code: MSDNSQKKVIVGMSGGVDSSVSAYLLKQQGYQVEGLFMKNWEEDDDSEYCTAAEDLADAQAVCDKLGIHLHKINFAAEYWDNVFEYFLSEYKAGRTPNPDILCNKEIKFKAFLEFADEVLDADYIAMGHYVRRSFPENGEKPQMLRGLDGNKDQSYFLYTLSHEQVARSLFPVGELEKPEVRRIAEEQGLITAKKKDSTGICFIGERKFTDFLSRYLPAQPGNIESPEGEVLGQHQGLMYHTLGQRKGLHIGGRKGGGGNEEPWFVAEKDLKRNVLIAVQGQDHPMLKSEGLIASQLHWVEREPIRDVMKCTVKTRYRQQDIPCTIIPIDDENIKVIFDEPEIAVTPGQSAVFYQGDVCLGGGIIEKRIKYTQA.

Residues 12–19 and methionine 38 each bind ATP; that span reads GMSGGVDS. The tract at residues 98–100 is interaction with target base in tRNA; it reads NPD. Catalysis depends on cysteine 103, which acts as the Nucleophile. Cysteines 103 and 202 form a disulfide. Glycine 128 contributes to the ATP binding site. Residues 152–154 are interaction with tRNA; that stretch reads KDQ. Cysteine 202 serves as the catalytic Cysteine persulfide intermediate. The segment at 316 to 317 is interaction with tRNA; that stretch reads RY.

It belongs to the MnmA/TRMU family.

The protein resides in the cytoplasm. It catalyses the reaction S-sulfanyl-L-cysteinyl-[protein] + uridine(34) in tRNA + AH2 + ATP = 2-thiouridine(34) in tRNA + L-cysteinyl-[protein] + A + AMP + diphosphate + H(+). Its function is as follows. Catalyzes the 2-thiolation of uridine at the wobble position (U34) of tRNA, leading to the formation of s(2)U34. This is tRNA-specific 2-thiouridylase MnmA from Vibrio vulnificus (strain YJ016).